We begin with the raw amino-acid sequence, 270 residues long: Aliphatic sulfonates import ATP-binding protein SsuB 3 (270 aa).

One can recognise an ABC transporter domain in the interval 17–238; sequence LAVRNLKKAF…VRGSHRLAAL (222 aa). 49 to 56 contributes to the ATP binding site; the sequence is GRSGCGKS.

The protein belongs to the ABC transporter superfamily. Aliphatic sulfonates importer (TC 3.A.1.17.2) family. The complex is composed of two ATP-binding proteins (SsuB), two transmembrane proteins (SsuC) and a solute-binding protein (SsuA).

The protein localises to the cell inner membrane. It carries out the reaction ATP + H2O + aliphatic sulfonate-[sulfonate-binding protein]Side 1 = ADP + phosphate + aliphatic sulfonateSide 2 + [sulfonate-binding protein]Side 1.. Its function is as follows. Part of the ABC transporter complex SsuABC involved in aliphatic sulfonates import. Responsible for energy coupling to the transport system. The protein is Aliphatic sulfonates import ATP-binding protein SsuB 3 of Pseudomonas savastanoi pv. phaseolicola (strain 1448A / Race 6) (Pseudomonas syringae pv. phaseolicola (strain 1448A / Race 6)).